The primary structure comprises 283 residues: Large ribosomal subunit protein uL2 (283 aa).

Disordered stretches follow at residues 37-59 (AKKK…RGGG) and 219-283 (HKGI…RNSK). Positions 256–269 (WGKRHMGVKTRNNK) are enriched in basic residues.

The protein belongs to the universal ribosomal protein uL2 family. Part of the 50S ribosomal subunit. Forms a bridge to the 30S subunit in the 70S ribosome.

In terms of biological role, one of the primary rRNA binding proteins. Required for association of the 30S and 50S subunits to form the 70S ribosome, for tRNA binding and peptide bond formation. It has been suggested to have peptidyltransferase activity; this is somewhat controversial. Makes several contacts with the 16S rRNA in the 70S ribosome. In Mycoplasmoides gallisepticum (strain R(low / passage 15 / clone 2)) (Mycoplasma gallisepticum), this protein is Large ribosomal subunit protein uL2.